A 621-amino-acid chain; its full sequence is (-)-beta-phellandrene synthase 1, chloroplastic (621 aa).

A chloroplast-targeting transit peptide spans 1–49; sequence MALALVSVAPLVSMRRSLFSSPYELKSIDKTIPNLVMCRKRMLGRPSIR. 3 residues coordinate Mg(2+): Asp372, Asp376, and Asp524. Residues 372–376 carry the DDXXD motif motif; the sequence is DDIYD.

Belongs to the terpene synthase family. Tpsd subfamily. Mg(2+) serves as cofactor. Mn(2+) is required as a cofactor.

The protein localises to the plastid. Its subcellular location is the chloroplast. It catalyses the reaction (2E)-geranyl diphosphate = (-)-beta-phellandrene + diphosphate. It participates in terpene metabolism; oleoresin biosynthesis. The protein operates within secondary metabolite biosynthesis; terpenoid biosynthesis. Monoterpene synthase (TPS) involved in the biosynthesis of monoterpene natural products included in conifer oleoresin secretions and volatile emissions; these compounds contribute to biotic and abiotic stress defense against herbivores and pathogens. Catalyzes the conversion of (2E)-geranyl diphosphate (GPP) to (-)-beta-phellandrene. This is (-)-beta-phellandrene synthase 1, chloroplastic from Pinus banksiana (Jack pine).